Consider the following 310-residue polypeptide: Porphobilinogen deaminase (310 aa).

Cys-242 is modified (S-(dipyrrolylmethanemethyl)cysteine).

It belongs to the HMBS family. Monomer. Requires dipyrromethane as cofactor.

The catalysed reaction is 4 porphobilinogen + H2O = hydroxymethylbilane + 4 NH4(+). Its pathway is porphyrin-containing compound metabolism; protoporphyrin-IX biosynthesis; coproporphyrinogen-III from 5-aminolevulinate: step 2/4. Its function is as follows. Tetrapolymerization of the monopyrrole PBG into the hydroxymethylbilane pre-uroporphyrinogen in several discrete steps. This Shewanella baltica (strain OS223) protein is Porphobilinogen deaminase.